The primary structure comprises 339 residues: DNA-directed RNA polymerase subunit alpha (339 aa).

The alpha N-terminal domain (alpha-NTD) stretch occupies residues 1 to 233 (MVREEVAGST…DLFLPFLHAE (233 aa)). The tract at residues 264 to 339 (KKGIPLNCIF…IDLLKNKLSF (76 aa)) is alpha C-terminal domain (alpha-CTD).

This sequence belongs to the RNA polymerase alpha chain family. As to quaternary structure, in plastids the minimal PEP RNA polymerase catalytic core is composed of four subunits: alpha, beta, beta', and beta''. When a (nuclear-encoded) sigma factor is associated with the core the holoenzyme is formed, which can initiate transcription.

The protein resides in the plastid. It localises to the chloroplast. It carries out the reaction RNA(n) + a ribonucleoside 5'-triphosphate = RNA(n+1) + diphosphate. Its function is as follows. DNA-dependent RNA polymerase catalyzes the transcription of DNA into RNA using the four ribonucleoside triphosphates as substrates. This chain is DNA-directed RNA polymerase subunit alpha, found in Thinopyrum bessarabicum (Wheatgrass).